The chain runs to 603 residues: UvrABC system protein C (603 aa).

Residues 15 to 92 (DQPGCYLMKD…IKKHDPRFNI (78 aa)) form the GIY-YIG domain. The UVR domain occupies 197-232 (KTVKNDLMKKMQEAAENMEFEKAGEFRDQINAIETT).

The protein belongs to the UvrC family. In terms of assembly, interacts with UvrB in an incision complex.

The protein localises to the cytoplasm. Functionally, the UvrABC repair system catalyzes the recognition and processing of DNA lesions. UvrC both incises the 5' and 3' sides of the lesion. The N-terminal half is responsible for the 3' incision and the C-terminal half is responsible for the 5' incision. The sequence is that of UvrABC system protein C from Listeria monocytogenes serotype 4b (strain F2365).